The primary structure comprises 140 residues: Nucleoside diphosphate kinase (140 aa).

Residues Lys10, Phe58, Arg86, Thr92, Arg103, and Asn113 each coordinate ATP. Catalysis depends on His116, which acts as the Pros-phosphohistidine intermediate.

Belongs to the NDK family. As to quaternary structure, homotetramer. Mg(2+) serves as cofactor.

The protein localises to the cytoplasm. It carries out the reaction a 2'-deoxyribonucleoside 5'-diphosphate + ATP = a 2'-deoxyribonucleoside 5'-triphosphate + ADP. The enzyme catalyses a ribonucleoside 5'-diphosphate + ATP = a ribonucleoside 5'-triphosphate + ADP. In terms of biological role, major role in the synthesis of nucleoside triphosphates other than ATP. The ATP gamma phosphate is transferred to the NDP beta phosphate via a ping-pong mechanism, using a phosphorylated active-site intermediate. In Anaplasma phagocytophilum (strain HZ), this protein is Nucleoside diphosphate kinase.